The chain runs to 373 residues: Leucine aminopeptidase 1 (373 aa).

The N-terminal stretch at 1–18 (MKLLSVLALSATASSVLG) is a signal peptide. Residues 19–75 (ASIPVDTRAEKFLIELAPGETRWVTEEEKWALKESGQDFFDITDEEVGFTAAVAQPA) constitute a propeptide that is removed on maturation. Zn(2+) is bound by residues His176 and Asp195. Asn196 carries an N-linked (GlcNAc...) asparagine glycan. 2 residues coordinate Zn(2+): Glu234 and Asp261. N-linked (GlcNAc...) asparagine glycosylation is present at Asn288. Cys310 and Cys314 form a disulfide bridge. His343 contacts Zn(2+). A glycan (N-linked (GlcNAc...) asparagine) is linked at Asn348.

The protein belongs to the peptidase M28 family. M28E subfamily. In terms of assembly, monomer. Zn(2+) serves as cofactor.

It is found in the secreted. Its function is as follows. Extracellular aminopeptidase that allows assimilation of proteinaceous substrates. The protein is Leucine aminopeptidase 1 (LAP1) of Arthroderma gypseum (strain ATCC MYA-4604 / CBS 118893) (Microsporum gypseum).